A 165-amino-acid chain; its full sequence is HTH-type transcriptional regulator IscR (165 aa).

An HTH rrf2-type domain is found at 2 to 131; that stretch reads RLTSKGRYAV…NNITLAELVN (130 aa). The segment at residues 28 to 51 is a DNA-binding region (H-T-H motif); that stretch reads LADISERQGISLSYLEQLFSRLRK. [2Fe-2S] cluster-binding residues include Cys-92, Cys-98, and Cys-104.

It depends on [2Fe-2S] cluster as a cofactor.

In terms of biological role, regulates the transcription of several operons and genes involved in the biogenesis of Fe-S clusters and Fe-S-containing proteins. This chain is HTH-type transcriptional regulator IscR, found in Erwinia tasmaniensis (strain DSM 17950 / CFBP 7177 / CIP 109463 / NCPPB 4357 / Et1/99).